Consider the following 1172-residue polypeptide: RNA polymerase-associated protein CTR9 homolog (1172 aa).

16 TPR repeats span residues 41 to 75, 129 to 162, 163 to 196, 198 to 231, 235 to 268, 306 to 339, 341 to 374, 412 to 444, 451 to 484, 497 to 530, 531 to 564, 566 to 598, 613 to 646, 648 to 680, 681 to 714, and 717 to 750; these read LHIWIALGLEYYKQVKTEDFVKLLEAARIDGNLDY, NHLLGRACFCLLEGDKMDQADAQFHFVLNQSPNN, IPALLGKACISFNKKDYRGALAYYKKALRTNPGC, AGVRLGMGHCFVKLNKLDKARLAFGRALDLNPTC, LVGLAVLELNNKEADSIKNGVQLLSKAYTIDPSN, AESCYQLARSFHVQEDYDQAFQYYYQATQFAAAS, VLPFFGLGQMYIYRGDKENASQCFEKVLKAYPNN, VEAWIELAQILEQTDIQNALSAYGTATRILQEK, PEILNNVGALHFRLGNLGEAKKYFLASLDRAKAE, VTTTYNLARLYEGLCEFHESEKLYKNILREHPNY, VDCYLRLGAMARDKGNFYEASDWFKEALQINQDH, DAWSLIGNLHLAKQEWGPGQKKFERILKQPSTQ, QTLHQPTRDREKEKRHQDRALAIYKQVLRNDSKN, YAANGIGAVLAHKGYVREARDVFAQVREATADI, SDVWLNLAHIYVEQKQYISAVQMYENCLRKFYKH, and TEVLLYLARALFKCGKLQECKQILLKARHVAPND. The segment at 889 to 1172 is disordered; sequence LNFTGEMETP…KSDRGSDDSD (284 aa). The span at 921–932 shows a compositional bias: acidic residues; it reads FDEFVNDDSDED. Gly residues predominate over residues 944 to 954; the sequence is GGSSGSGGEQG. 2 stretches are compositionally biased toward basic residues: residues 965-975 and 991-1001; these read KKKKKRRKRPQ and PKKRQPKKREK. The segment covering 1032-1042 has biased composition (basic and acidic residues); that stretch reads DKLKIADEGHG. Polar residues-rich tracts occupy residues 1068-1093, 1105-1134, and 1149-1159; these read DNANKSGSGAGSPQKSPQSDGDSDNN, GSDNDSAQSRRSSGGSDNESRAASRSPESQ, and ASPNESEQEAS. The span at 1160-1172 shows a compositional bias: basic and acidic residues; that stretch reads NNEKSDRGSDDSD.

Component of the PAF1 complex, which at least consists of cdc73, paf1, leo1, ctr9 and rtf1. The PAF1 complex interacts with PHF5A.

It is found in the nucleus speckle. Component of the PAF1 complex (PAF1C) which has multiple functions during transcription by RNA polymerase II. PAF1C associates with RNA polymerase II, is involved in transcriptional elongation and in histone modifications including methylation on histone H3 'Lys-4' (H3K4me3). The polypeptide is RNA polymerase-associated protein CTR9 homolog (ctr9) (Xenopus tropicalis (Western clawed frog)).